The chain runs to 250 residues: tRNA pseudouridine synthase A (250 aa).

Asp52 (nucleophile) is an active-site residue. Substrate is bound at residue Tyr111.

The protein belongs to the tRNA pseudouridine synthase TruA family. Homodimer.

It carries out the reaction uridine(38/39/40) in tRNA = pseudouridine(38/39/40) in tRNA. Its function is as follows. Formation of pseudouridine at positions 38, 39 and 40 in the anticodon stem and loop of transfer RNAs. In Methylorubrum extorquens (strain PA1) (Methylobacterium extorquens), this protein is tRNA pseudouridine synthase A.